A 957-amino-acid chain; its full sequence is Glycine dehydrogenase (decarboxylating) 2 (957 aa).

Position 707 is an N6-(pyridoxal phosphate)lysine (K707).

Belongs to the GcvP family. As to quaternary structure, the glycine cleavage system is composed of four proteins: P, T, L and H. Pyridoxal 5'-phosphate serves as cofactor.

It carries out the reaction N(6)-[(R)-lipoyl]-L-lysyl-[glycine-cleavage complex H protein] + glycine + H(+) = N(6)-[(R)-S(8)-aminomethyldihydrolipoyl]-L-lysyl-[glycine-cleavage complex H protein] + CO2. Its function is as follows. The glycine cleavage system catalyzes the degradation of glycine. The P protein binds the alpha-amino group of glycine through its pyridoxal phosphate cofactor; CO(2) is released and the remaining methylamine moiety is then transferred to the lipoamide cofactor of the H protein. This chain is Glycine dehydrogenase (decarboxylating) 2, found in Pseudomonas fluorescens (strain ATCC BAA-477 / NRRL B-23932 / Pf-5).